The chain runs to 611 residues: Glutamine--fructose-6-phosphate aminotransferase [isomerizing] (611 aa).

Cys2 functions as the Nucleophile; for GATase activity in the catalytic mechanism. In terms of domain architecture, Glutamine amidotransferase type-2 spans 2 to 219 (CGIVGAIAER…EGDIAEIRRD (218 aa)). SIS domains follow at residues 287 to 427 (AAEL…VQKR) and 460 to 601 (VSEL…VDQP). The For Fru-6P isomerization activity role is filled by Lys606.

Homodimer.

It localises to the cytoplasm. The catalysed reaction is D-fructose 6-phosphate + L-glutamine = D-glucosamine 6-phosphate + L-glutamate. Catalyzes the first step in hexosamine metabolism, converting fructose-6P into glucosamine-6P using glutamine as a nitrogen source. The sequence is that of Glutamine--fructose-6-phosphate aminotransferase [isomerizing] from Pseudomonas aeruginosa (strain ATCC 15692 / DSM 22644 / CIP 104116 / JCM 14847 / LMG 12228 / 1C / PRS 101 / PAO1).